We begin with the raw amino-acid sequence, 192 residues long: GTP cyclohydrolase-2 (192 aa).

Position 50–54 (50–54) interacts with GTP; the sequence is RLHSE. Residues C55, C66, and C68 each contribute to the Zn(2+) site. Residues 92–94 and T114 contribute to the GTP site; that span reads EGR. The Proton acceptor role is filled by D126. R128 functions as the Nucleophile in the catalytic mechanism. GTP-binding residues include T149 and K154.

It belongs to the GTP cyclohydrolase II family. Requires Zn(2+) as cofactor.

The catalysed reaction is GTP + 4 H2O = 2,5-diamino-6-hydroxy-4-(5-phosphoribosylamino)-pyrimidine + formate + 2 phosphate + 3 H(+). Its pathway is cofactor biosynthesis; riboflavin biosynthesis; 5-amino-6-(D-ribitylamino)uracil from GTP: step 1/4. Functionally, catalyzes the conversion of GTP to 2,5-diamino-6-ribosylamino-4(3H)-pyrimidinone 5'-phosphate (DARP), formate and pyrophosphate. The protein is GTP cyclohydrolase-2 of Helicobacter acinonychis (strain Sheeba).